A 65-amino-acid polypeptide reads, in one-letter code: Large ribosomal subunit protein bL35 (65 aa).

A disordered region spans residues 1–26; it reads MPKIKTVRGAAKRFKKTASGGFKRKQ. Over residues 10-26 the composition is skewed to basic residues; that stretch reads AAKRFKKTASGGFKRKQ.

This sequence belongs to the bacterial ribosomal protein bL35 family.

The sequence is that of Large ribosomal subunit protein bL35 from Actinobacillus pleuropneumoniae serotype 7 (strain AP76).